Here is an 808-residue protein sequence, read N- to C-terminus: Dynamin-related protein 3A (808 aa).

The disordered stretch occupies residues methionine 1–alanine 31. Over residues proline 16–threonine 28 the composition is skewed to low complexity. Residues threonine 56–proline 330 form the Dynamin-type G domain. The G1 motif stretch occupies residues glycine 66–serine 73. A GTP-binding site is contributed by glycine 66–serine 73. A G2 motif region spans residues cysteine 92–arginine 94. Residues aspartate 172–glycine 175 are G3 motif. GTP-binding positions include aspartate 172–isoleucine 176 and threonine 241–aspartate 244. The segment at threonine 241 to aspartate 244 is G4 motif. A G5 motif region spans residues valine 271–cysteine 274. The interval isoleucine 548 to glycine 578 is disordered. Residues arginine 554 to arginine 563 are compositionally biased toward basic and acidic residues. Positions threonine 564–serine 575 are enriched in low complexity. A GED domain is found at isoleucine 670–aspartate 761. Residues leucine 774–phenylalanine 808 form a disordered region. Positions threonine 775–threonine 792 are enriched in low complexity.

This sequence belongs to the TRAFAC class dynamin-like GTPase superfamily. Dynamin/Fzo/YdjA family. In terms of assembly, homooligomer. Interacts with ARC5 on peroxisomes and ELM1 on mitochondria. In terms of tissue distribution, ubiquitous. Preferentially expressed in flowers.

The protein resides in the mitochondrion. It localises to the peroxisome. Involved in the control of mitochondrial and peroxisomal division and morphology. In association with PEX11C, PEX11D, PEX11E and FIS1B, is involved in cell cycle-associated constitutive self-replication of preexisting peroxisomes. The protein is Dynamin-related protein 3A (DRP3A) of Arabidopsis thaliana (Mouse-ear cress).